A 381-amino-acid chain; its full sequence is MTQTTHHTPDTARQADPFPVKGMDAVVFAVGNAKQAAHYYSTAFGMKLVAYSGPENGSRETASYVLESGSARFVFTSVIKPSTDWGTFLAQHVAEHGDGVVDLAIEVPDARAAHAYAVEHGARSLAEPHEVKDEHGTVVLAAIATYGETRHTLVERTGYDGPYLPGYVAAKPMVAPPAQRVFQAVDHCVGNVELGRMNEWVGFYNKVMGFTNMKEFVGDDIATEYSALMSKVVADGTLKVKFPINEPAIAKKKSQIDEYLEFYGGAGVQHIALNTNDIVATVRAMRAAGVEFLDTPDSYYDTLGEWAGETRVPVDVLRELKILVDRDEDGYLLQIFTKPVQDRPTVFFEMIERHGSMGFGKGNFKALFEAIEREQEKRGNL.

VOC domains are found at residues 22 to 156 and 184 to 338; these read GMDA…LVER and AVDH…IFTK. Fe cation contacts are provided by histidine 187, histidine 270, and glutamate 349.

This sequence belongs to the 4HPPD family. As to quaternary structure, homodimer. Fe cation serves as cofactor.

The enzyme catalyses 3-(4-hydroxyphenyl)pyruvate + O2 = homogentisate + CO2. It participates in amino-acid degradation; L-phenylalanine degradation; acetoacetate and fumarate from L-phenylalanine: step 3/6. The protein is 4-hydroxyphenylpyruvate dioxygenase (hpd) of Streptomyces coelicolor (strain ATCC BAA-471 / A3(2) / M145).